A 657-amino-acid chain; its full sequence is Methylenetetrahydrofolate reductase 1 (657 aa).

Glu-18 (proton donor/acceptor) is an active-site residue. NAD(+)-binding positions include 18–23 (EFFPPK) and 49–50 (TW). Residues 49-50 (TW), His-78, and 108-110 (RGD) each bind FAD. Asp-110 provides a ligand contact to substrate. A Phosphoserine modification is found at Ser-120. Residues 129–130 (YA), Tyr-152, Asp-171, and Lys-178 contribute to the FAD site. Substrate-binding residues include Gln-189 and Tyr-286. At Ser-301 the chain carries Phosphoserine. Residues 308–329 (VNESSEEEGEDETSGEIGSIEN) form a disordered region. Acidic residues predominate over residues 311–321 (SSEEEGEDETS). Residue Ser-358 is modified to Phosphoserine.

It belongs to the methylenetetrahydrofolate reductase family. FAD is required as a cofactor.

It catalyses the reaction (6S)-5-methyl-5,6,7,8-tetrahydrofolate + NADP(+) = (6R)-5,10-methylene-5,6,7,8-tetrahydrofolate + NADPH + H(+). The catalysed reaction is (6S)-5-methyl-5,6,7,8-tetrahydrofolate + NAD(+) = (6R)-5,10-methylene-5,6,7,8-tetrahydrofolate + NADH + H(+). The protein operates within one-carbon metabolism; tetrahydrofolate interconversion. In Saccharomyces cerevisiae (strain ATCC 204508 / S288c) (Baker's yeast), this protein is Methylenetetrahydrofolate reductase 1 (MET12).